We begin with the raw amino-acid sequence, 385 residues long: tRNA pseudouridine synthase D (385 aa).

The active-site Nucleophile is Asp65. In terms of domain architecture, TRUD spans 143 to 345; that stretch reads GCENYFGEQR…SDGVRKAFFK (203 aa).

Belongs to the pseudouridine synthase TruD family.

The catalysed reaction is uridine(13) in tRNA = pseudouridine(13) in tRNA. Functionally, responsible for synthesis of pseudouridine from uracil-13 in transfer RNAs. The protein is tRNA pseudouridine synthase D of Aquifex aeolicus (strain VF5).